The sequence spans 315 residues: Methionyl-tRNA formyltransferase (315 aa).

Position 110–113 (110–113) interacts with (6S)-5,6,7,8-tetrahydrofolate; it reads SLLP.

It belongs to the Fmt family.

It carries out the reaction L-methionyl-tRNA(fMet) + (6R)-10-formyltetrahydrofolate = N-formyl-L-methionyl-tRNA(fMet) + (6S)-5,6,7,8-tetrahydrofolate + H(+). Its function is as follows. Attaches a formyl group to the free amino group of methionyl-tRNA(fMet). The formyl group appears to play a dual role in the initiator identity of N-formylmethionyl-tRNA by promoting its recognition by IF2 and preventing the misappropriation of this tRNA by the elongation apparatus. This is Methionyl-tRNA formyltransferase from Cutibacterium acnes (strain DSM 16379 / KPA171202) (Propionibacterium acnes).